Consider the following 331-residue polypeptide: Pyruvate dehydrogenase E1 component subunit beta (331 aa).

Glutamate 60 serves as a coordination point for thiamine diphosphate. Residues leucine 113, alanine 161, isoleucine 162, aspartate 164, and asparagine 166 each contribute to the K(+) site.

In terms of assembly, heterodimer of an alpha and a beta chain. The cofactor is thiamine diphosphate.

The protein localises to the plastid. The protein resides in the chloroplast. It carries out the reaction N(6)-[(R)-lipoyl]-L-lysyl-[protein] + pyruvate + H(+) = N(6)-[(R)-S(8)-acetyldihydrolipoyl]-L-lysyl-[protein] + CO2. The pyruvate dehydrogenase complex catalyzes the overall conversion of pyruvate to acetyl-CoA and CO(2). It contains multiple copies of three enzymatic components: pyruvate dehydrogenase (E1), dihydrolipoamide acetyltransferase (E2) and lipoamide dehydrogenase (E3). This chain is Pyruvate dehydrogenase E1 component subunit beta (pdhB), found in Porphyra purpurea (Red seaweed).